A 485-amino-acid chain; its full sequence is Rhamnulokinase (485 aa).

12 to 16 (ATSGR) serves as a coordination point for ATP. Substrate is bound by residues Gly80 and 238–240 (HDT). Residue Asp239 is the Proton acceptor of the active site. Thr261 provides a ligand contact to ATP. Position 298 (Asn298) interacts with substrate. Glu306 provides a ligand contact to ATP. The cysteines at positions 355 and 372 are disulfide-linked. Position 404 (Gly404) interacts with ATP.

Belongs to the rhamnulokinase family. Mg(2+) serves as cofactor.

The enzyme catalyses L-rhamnulose + ATP = L-rhamnulose 1-phosphate + ADP + H(+). Its pathway is carbohydrate degradation; L-rhamnose degradation; glycerone phosphate from L-rhamnose: step 2/3. Its function is as follows. Involved in the catabolism of L-rhamnose (6-deoxy-L-mannose). Catalyzes the transfer of the gamma-phosphate group from ATP to the 1-hydroxyl group of L-rhamnulose to yield L-rhamnulose 1-phosphate. This Bacteroides thetaiotaomicron (strain ATCC 29148 / DSM 2079 / JCM 5827 / CCUG 10774 / NCTC 10582 / VPI-5482 / E50) protein is Rhamnulokinase.